Here is a 353-residue protein sequence, read N- to C-terminus: Fasciculation and elongation protein zeta-2 (353 aa).

The segment at 19 to 49 is disordered; it reads SLLDQENCNASPEPGAEAGAEAGGGADGFPA. The span at 28 to 38 shows a compositional bias: low complexity; sequence ASPEPGAEAGA. A phosphoserine mark is found at Ser-135, Ser-176, and Ser-195. Residues 214–286 adopt a coiled-coil conformation; the sequence is KRLSVSELNE…AKKKKKLKNG (73 aa). Residues 271-300 are disordered; the sequence is KEHKETAKKKKKLKNGSSQNGKNERSHMPG.

The protein belongs to the zygin family. As to quaternary structure, homodimer; disulfide-linked. May form heterodimers with FEZ1. Interacts with synaptotagmin. In terms of tissue distribution, expressed in nonneural tissues, such as heart, lung, spleen, muscle, testis, placenta and melanocytes.

Functionally, involved in axonal outgrowth and fasciculation. The chain is Fasciculation and elongation protein zeta-2 (FEZ2) from Homo sapiens (Human).